Consider the following 177-residue polypeptide: Cytochrome c-type biogenesis protein CcmE (177 aa).

Topologically, residues 1–8 (MNPRRKSR) are cytoplasmic. The helical; Signal-anchor for type II membrane protein transmembrane segment at 9-29 (LKVVMAVLSGLAVAVGLTLYA) threads the bilayer. At 30 to 177 (LSQNIDLFYT…QISQPFGENK (148 aa)) the chain is on the periplasmic side. Residues His131 and Tyr135 each contribute to the heme site. The interval 134-177 (NYMPPELGDQMKKQHQPMGISEADLKGKSERDATQISQPFGENK) is disordered. Basic and acidic residues predominate over residues 156-166 (ADLKGKSERDA). The span at 167–177 (TQISQPFGENK) shows a compositional bias: polar residues.

Belongs to the CcmE/CycJ family.

The protein localises to the cell inner membrane. In terms of biological role, heme chaperone required for the biogenesis of c-type cytochromes. Transiently binds heme delivered by CcmC and transfers the heme to apo-cytochromes in a process facilitated by CcmF and CcmH. This is Cytochrome c-type biogenesis protein CcmE from Glaesserella parasuis serovar 5 (strain SH0165) (Haemophilus parasuis).